A 154-amino-acid polypeptide reads, in one-letter code: Flagellar assembly factor FliW (154 aa).

It belongs to the FliW family. As to quaternary structure, interacts with translational regulator CsrA and flagellin(s).

The protein resides in the cytoplasm. Its function is as follows. Acts as an anti-CsrA protein, binds CsrA and prevents it from repressing translation of its target genes, one of which is flagellin. Binds to flagellin and participates in the assembly of the flagellum. The chain is Flagellar assembly factor FliW from Carboxydothermus hydrogenoformans (strain ATCC BAA-161 / DSM 6008 / Z-2901).